Consider the following 304-residue polypeptide: Xylanase inhibitor protein 1 (304 aa).

The signal sequence occupies residues 1–30 (MAPLAARRPACLLALLSVAAALFLTPTALA). Positions 36 to 304 (GQVTVFWGRN…NYSSLIKYYA (269 aa)) constitute a GH18 domain. The cysteines at positions 55 and 96 are disulfide-linked. Asparagine 119 carries an N-linked (GlcNAc...) asparagine glycan. Glutamate 158 (proton donor) is an active-site residue. The interaction with fungal GH11 xylanase stretch occupies residues 178–184 (IRGGPGK). Cysteine 194 and cysteine 225 are disulfide-bonded. Residues 262 to 275 (HPKNVYYGVAPVAQ) form an interaction with fungal GH10 xylanase region. Residue asparagine 295 is glycosylated (N-linked (GlcNAc...) asparagine).

This sequence belongs to the glycosyl hydrolase 18 family. Xylanase inhibitor subfamily. Binds to fungal GH10 and GH11 xylanases. Also forms a ternary complex with barley alpha-amylase 1 (AMY1) and insoluble starch.

It localises to the secreted. Fungal xylanase inhibitor. Possesses competitive inhibiting activity against fungal endo-1,4-beta-D-xylanases belonging to glycoside hydrolase family 10 (GH10) and family 11 (GH11). Possesses also inhibitory activity towards barley alpha-amylases. Binding to xylanases or amylases is necessary for inhibition activity. May function in plant defense against secreted fungal pathogen xylanases. Is similar to class III chitinases, but does not exhibit chitinase activity. This is Xylanase inhibitor protein 1 from Triticum aestivum (Wheat).